Here is a 517-residue protein sequence, read N- to C-terminus: Retrotransposon-like protein 1 (517 aa).

Disordered regions lie at residues 1-29 and 142-161; these read MEVN…QQQL and EEER…DARS.

The sequence is that of Retrotransposon-like protein 1 (retr-1) from Caenorhabditis elegans.